We begin with the raw amino-acid sequence, 466 residues long: Histidinol dehydrogenase, chloroplastic (466 aa).

The N-terminal 30 residues, 1–30, are a transit peptide targeting the chloroplast; sequence MSLNLSRLSLLSSPRISISTHAPRKGYVCC. Y155, Q217, and N240 together coordinate NAD(+). Positions 266, 288, and 291 each coordinate substrate. Positions 288 and 291 each coordinate Zn(2+). Active-site proton acceptor residues include E356 and H357. Residues H357, D390, E444, and H449 each contribute to the substrate site. Residue D390 coordinates Zn(2+). H449 is a Zn(2+) binding site.

Belongs to the histidinol dehydrogenase family. The cofactor is Zn(2+).

Its subcellular location is the plastid. It is found in the chloroplast. The enzyme catalyses L-histidinol + 2 NAD(+) + H2O = L-histidine + 2 NADH + 3 H(+). It participates in amino-acid biosynthesis; L-histidine biosynthesis; L-histidine from 5-phospho-alpha-D-ribose 1-diphosphate: step 9/9. Catalyzes the sequential NAD-dependent oxidations of L-histidinol to L-histidinaldehyde and then to L-histidine. This chain is Histidinol dehydrogenase, chloroplastic (HISN8), found in Arabidopsis thaliana (Mouse-ear cress).